A 176-amino-acid chain; its full sequence is tRNA (adenine(37)-N6)-methyltransferase (176 aa).

In terms of domain architecture, TsaA-like spans S1–D94. S-adenosyl-L-methionine is bound by residues H12, H12–G13, R40, L50, and L74–T77.

This sequence belongs to the tRNA methyltransferase O family.

The catalysed reaction is N(6)-L-threonylcarbamoyladenosine(37) in tRNA + S-adenosyl-L-methionine = N(6)-methyl,N(6)-L-threonylcarbamoyladenosine(37) in tRNA + S-adenosyl-L-homocysteine + H(+). In terms of biological role, S-adenosyl-L-methionine-dependent methyltransferase responsible for the addition of the methyl group in the formation of N6-methyl-N6-threonylcarbamoyladenosine at position 37 (m(6)t(6)A37) of the tRNA anticodon loop of tRNA(Thr)(GGU). The methyl group of m(6)t(6)A37 appears to slightly improve the efficiency of the tRNA decoding ability. Binds to tRNA. This chain is tRNA (adenine(37)-N6)-methyltransferase, found in Eikenella corrodens.